The sequence spans 163 residues: 2-C-methyl-D-erythritol 2,4-cyclodiphosphate synthase (163 aa).

A divalent metal cation is bound by residues Asp12 and His14. 4-CDP-2-C-methyl-D-erythritol 2-phosphate is bound by residues 12-14 (DVH) and 38-39 (HS). His46 serves as a coordination point for a divalent metal cation. 4-CDP-2-C-methyl-D-erythritol 2-phosphate is bound by residues 60-62 (DIG), 136-139 (TTSE), Phe143, and Arg146.

This sequence belongs to the IspF family. In terms of assembly, homotrimer. A divalent metal cation serves as cofactor.

It catalyses the reaction 4-CDP-2-C-methyl-D-erythritol 2-phosphate = 2-C-methyl-D-erythritol 2,4-cyclic diphosphate + CMP. The protein operates within isoprenoid biosynthesis; isopentenyl diphosphate biosynthesis via DXP pathway; isopentenyl diphosphate from 1-deoxy-D-xylulose 5-phosphate: step 4/6. Its function is as follows. Involved in the biosynthesis of isopentenyl diphosphate (IPP) and dimethylallyl diphosphate (DMAPP), two major building blocks of isoprenoid compounds. Catalyzes the conversion of 4-diphosphocytidyl-2-C-methyl-D-erythritol 2-phosphate (CDP-ME2P) to 2-C-methyl-D-erythritol 2,4-cyclodiphosphate (ME-CPP) with a corresponding release of cytidine 5-monophosphate (CMP). In Xanthomonas campestris pv. campestris (strain 8004), this protein is 2-C-methyl-D-erythritol 2,4-cyclodiphosphate synthase.